A 596-amino-acid polypeptide reads, in one-letter code: Elongation factor 4 (596 aa).

In terms of domain architecture, tr-type G spans 2–184; that stretch reads KHIRNFSIIA…VIVAQIPSPE (183 aa). GTP contacts are provided by residues 14 to 19 and 131 to 134; these read DHGKST and NKID.

This sequence belongs to the TRAFAC class translation factor GTPase superfamily. Classic translation factor GTPase family. LepA subfamily.

It is found in the cell inner membrane. The enzyme catalyses GTP + H2O = GDP + phosphate + H(+). Functionally, required for accurate and efficient protein synthesis under certain stress conditions. May act as a fidelity factor of the translation reaction, by catalyzing a one-codon backward translocation of tRNAs on improperly translocated ribosomes. Back-translocation proceeds from a post-translocation (POST) complex to a pre-translocation (PRE) complex, thus giving elongation factor G a second chance to translocate the tRNAs correctly. Binds to ribosomes in a GTP-dependent manner. The chain is Elongation factor 4 from Shewanella sediminis (strain HAW-EB3).